A 133-amino-acid chain; its full sequence is Small ribosomal subunit protein bS6 (133 aa).

It belongs to the bacterial ribosomal protein bS6 family.

Its function is as follows. Binds together with bS18 to 16S ribosomal RNA. The sequence is that of Small ribosomal subunit protein bS6 from Chlorobium limicola (strain DSM 245 / NBRC 103803 / 6330).